A 519-amino-acid polypeptide reads, in one-letter code: Zinc finger and BTB domain-containing protein 18.3 (519 aa).

The 68-residue stretch at 24–91 folds into the BTB domain; the sequence is CDCTVLVGDA…MYEGKLQFKD (68 aa). Positions 189 to 227 are disordered; that stretch reads ASIPQTGGEVDTHTTAAGKTADSPCSSTGSLSHRSATSM. A compositionally biased stretch (polar residues) spans 201 to 227; it reads HTTAAGKTADSPCSSTGSLSHRSATSM. 4 C2H2-type zinc fingers span residues 367–389, 407–429, 435–457, and 463–486; these read FMCPLCNKVFPSPHILQIHLSTH, PTCSLCGKTFSCMYTLKRHERTH, FTCTQCGKSFQYSHNLSRHAVVH, and HACKWCERRFTQSGDLYRHIRKFH.

This sequence belongs to the krueppel C2H2-type zinc-finger protein family. ZBTB18 subfamily.

It is found in the nucleus. Transcriptional repressor that plays a role in various developmental processes. Specifically binds the consensus DNA sequence 5'-[AC]ACATCTG[GT][AC]-3' which contains the E box core, and acts by recruiting chromatin remodeling multiprotein complexes. The protein is Zinc finger and BTB domain-containing protein 18.3 (zbtb18.3) of Xenopus laevis (African clawed frog).